The primary structure comprises 361 residues: NAD-dependent protein deacetylase hst2-1 (361 aa).

Residues 16–276 enclose the Deacetylase sirtuin-type domain; it reads SVLEARTVEA…RKLARALGWE (261 aa). NAD(+) contacts are provided by residues 43 to 63 and 126 to 129; these read GAGISTAAGIPDFRSPDTGIY and QNID. The active-site Proton acceptor is the His146. Zn(2+) contacts are provided by Cys154, Cys157, Cys178, and Cys181. NAD(+)-binding positions include 217–219, 242–244, and Cys262; these read GTS and NRE. The stretch at 294–328 forms a coiled coil; that stretch reads EEELATPRTREERLENEISRLTAEIDKTLKISDAY. The interval 335 to 361 is disordered; the sequence is RLEGEPLSSPESNGTGLAHVFPHLARR.

This sequence belongs to the sirtuin family. Class I subfamily. Zn(2+) is required as a cofactor.

It is found in the cytoplasm. The protein localises to the nucleus. The enzyme catalyses N(6)-acetyl-L-lysyl-[protein] + NAD(+) + H2O = 2''-O-acetyl-ADP-D-ribose + nicotinamide + L-lysyl-[protein]. Its function is as follows. NAD-dependent histone deacetylase, which could function in telomeric silencing, cell cycle progression and chromosome stability. The protein is NAD-dependent protein deacetylase hst2-1 of Emericella nidulans (strain FGSC A4 / ATCC 38163 / CBS 112.46 / NRRL 194 / M139) (Aspergillus nidulans).